Here is a 233-residue protein sequence, read N- to C-terminus: Small ribosomal subunit protein uS2 (233 aa).

The protein belongs to the universal ribosomal protein uS2 family.

The sequence is that of Small ribosomal subunit protein uS2 from Clostridium botulinum (strain Alaska E43 / Type E3).